Here is a 1053-residue protein sequence, read N- to C-terminus: DNA-directed RNA polymerase subunit beta' (1053 aa).

Positions 60, 62, 75, and 78 each coordinate Zn(2+). The Mg(2+) site is built by Asp449, Asp451, and Asp453.

It belongs to the RNA polymerase beta' chain family. The RNAP catalytic core consists of 2 alpha, 1 beta, 1 beta' and 1 omega subunit. When a sigma factor is associated with the core the holoenzyme is formed, which can initiate transcription. Mg(2+) is required as a cofactor. It depends on Zn(2+) as a cofactor.

It carries out the reaction RNA(n) + a ribonucleoside 5'-triphosphate = RNA(n+1) + diphosphate. In terms of biological role, DNA-dependent RNA polymerase catalyzes the transcription of DNA into RNA using the four ribonucleoside triphosphates as substrates. The protein is DNA-directed RNA polymerase subunit beta' of Brochothrix thermosphacta (Microbacterium thermosphactum).